We begin with the raw amino-acid sequence, 291 residues long: Exosome complex component RRP42 (291 aa).

Ala-2 is subject to N-acetylalanine. The residue at position 116 (Lys-116) is an N6-acetyllysine. Ser-177 bears the Phosphoserine mark.

It belongs to the RNase PH family. In terms of assembly, component of the RNA exosome core complex (Exo-9), composed of EXOSC1, EXOSC2, EXOSC3, EXOSC4, EXOSC5, EXOSC6, EXOSC7, EXOSC8 and EXOSC9; within the complex interacts with EXOSC2 and EXOSC4. The catalytically inactive RNA exosome core complex (Exo-9) associates with the catalytic subunit EXOSC10/RRP6. Exo-9 may associate with DIS3 to form the nucleolar exosome complex, or DIS3L to form the cytoplasmic exosome complex. Exo-9 is formed by a hexameric base ring consisting of the heterodimers EXOSC4-EXOSC9, EXOSC5-EXOSC8 and EXOSC6-EXOSC7, and a cap ring consisting of EXOSC1, EXOSC2 and EXOSC3. The RNA exosome complex associates with cofactors C1D/RRP47, MPHOSPH6/MPP6 and MTREX/MTR4. Interacts with ZC3HAV1. Interacts with DIS3; the interaction is direct.

Its subcellular location is the nucleus. The protein resides in the nucleolus. It localises to the cytoplasm. Its function is as follows. Non-catalytic component of the RNA exosome complex which has 3'-&gt;5' exoribonuclease activity and participates in a multitude of cellular RNA processing and degradation events. In the nucleus, the RNA exosome complex is involved in proper maturation of stable RNA species such as rRNA, snRNA and snoRNA, in the elimination of RNA processing by-products and non-coding 'pervasive' transcripts, such as antisense RNA species and promoter-upstream transcripts (PROMPTs), and of mRNAs with processing defects, thereby limiting or excluding their export to the cytoplasm. The RNA exosome may be involved in Ig class switch recombination (CSR) and/or Ig variable region somatic hypermutation (SHM) by targeting AICDA deamination activity to transcribed dsDNA substrates. In the cytoplasm, the RNA exosome complex is involved in general mRNA turnover and specifically degrades inherently unstable mRNAs containing AU-rich elements (AREs) within their 3' untranslated regions, and in RNA surveillance pathways, preventing translation of aberrant mRNAs. It seems to be involved in degradation of histone mRNA. The catalytic inactive RNA exosome core complex of 9 subunits (Exo-9) is proposed to play a pivotal role in the binding and presentation of RNA for ribonucleolysis, and to serve as a scaffold for the association with catalytic subunits and accessory proteins or complexes. The polypeptide is Exosome complex component RRP42 (EXOSC7) (Homo sapiens (Human)).